Here is a 122-residue protein sequence, read N- to C-terminus: Large ribosomal subunit protein uL14c (122 aa).

It belongs to the universal ribosomal protein uL14 family. Part of the 50S ribosomal subunit.

Its subcellular location is the plastid. It localises to the chloroplast. Its function is as follows. Binds to 23S rRNA. In Gnetum parvifolium (Small-leaved jointfir), this protein is Large ribosomal subunit protein uL14c.